A 210-amino-acid chain; its full sequence is T-cell surface glycoprotein CD8 beta chain (210 aa).

Residues 1 to 21 (MRPRLWLLLAAQLAVLHGSSV) form the signal peptide. The 111-residue stretch at 22–132 (LQQTPAYIKV…ELTFGKGTQL (111 aa)) folds into the Ig-like V-type domain. The Extracellular segment spans residues 22 to 170 (LQQTPAYIKV…ETQKGPLCSP (149 aa)). Cysteines 41 and 116 form a disulfide. Asn102 is a glycosylation site (N-linked (GlcNAc...) asparagine). The chain crosses the membrane as a helical span at residues 171 to 191 (ITLGLLVAGVLVLLVSLGVAI). Residues 192–210 (HLCCRRRRARLRFMKQFYK) lie on the Cytoplasmic side of the membrane.

In terms of assembly, forms disulfide-linked heterodimers with CD8A at the cell surface. Interacts with CD3D; this interaction couples TCR-CD3 with CD8. Interacts with LCK. Phosphorylated as a consequence of T-cell activation. Post-translationally, palmitoylated at the cytoplasmic tail and thereby targets the heterodimer CD8A/CD8B to lipid rafts unlike CD8A homodimers.

It is found in the cell membrane. Its function is as follows. Integral membrane glycoprotein that plays an essential role in the immune response and serves multiple functions in responses against both external and internal offenses. In T-cells, functions primarily as a coreceptor for MHC class I molecule:peptide complex. The antigens presented by class I peptides are derived from cytosolic proteins while class II derived from extracellular proteins. Interacts simultaneously with the T-cell receptor (TCR) and the MHC class I proteins presented by antigen presenting cells (APCs). In turn, recruits the Src kinase LCK to the vicinity of the TCR-CD3 complex. A palmitoylation site in the cytoplasmic tail of CD8B chain contributes to partitioning of CD8 into the plasma membrane lipid rafts where signaling proteins are enriched. Once LCK recruited, it initiates different intracellular signaling pathways by phosphorylating various substrates ultimately leading to lymphokine production, motility, adhesion and activation of cytotoxic T-lymphocytes (CTLs). Additionally, plays a critical role in thymic selection of CD8+ T-cells. The sequence is that of T-cell surface glycoprotein CD8 beta chain (CD8B) from Pongo pygmaeus (Bornean orangutan).